The primary structure comprises 341 residues: Heat-inducible transcription repressor HrcA (341 aa).

The protein belongs to the HrcA family.

Its function is as follows. Negative regulator of class I heat shock genes (grpE-dnaK-dnaJ and groELS operons). Prevents heat-shock induction of these operons. In Brevibacillus brevis (strain 47 / JCM 6285 / NBRC 100599), this protein is Heat-inducible transcription repressor HrcA.